A 337-amino-acid chain; its full sequence is Phenylalanine--tRNA ligase alpha subunit (337 aa).

Glu258 is a binding site for Mg(2+).

Belongs to the class-II aminoacyl-tRNA synthetase family. Phe-tRNA synthetase alpha subunit type 1 subfamily. In terms of assembly, tetramer of two alpha and two beta subunits. Mg(2+) is required as a cofactor.

It localises to the cytoplasm. It catalyses the reaction tRNA(Phe) + L-phenylalanine + ATP = L-phenylalanyl-tRNA(Phe) + AMP + diphosphate + H(+). This is Phenylalanine--tRNA ligase alpha subunit from Burkholderia thailandensis (strain ATCC 700388 / DSM 13276 / CCUG 48851 / CIP 106301 / E264).